Reading from the N-terminus, the 274-residue chain is 3-methyl-2-oxobutanoate hydroxymethyltransferase (274 aa).

Residues Asp-44 and Asp-83 each coordinate Mg(2+). Residues 44–45 (DS), Asp-83, and Lys-113 contribute to the 3-methyl-2-oxobutanoate site. Residue Glu-115 participates in Mg(2+) binding. Catalysis depends on Glu-182, which acts as the Proton acceptor.

Belongs to the PanB family. As to quaternary structure, homodecamer; pentamer of dimers. Mg(2+) is required as a cofactor.

Its subcellular location is the cytoplasm. The catalysed reaction is 3-methyl-2-oxobutanoate + (6R)-5,10-methylene-5,6,7,8-tetrahydrofolate + H2O = 2-dehydropantoate + (6S)-5,6,7,8-tetrahydrofolate. It participates in cofactor biosynthesis; (R)-pantothenate biosynthesis; (R)-pantoate from 3-methyl-2-oxobutanoate: step 1/2. In terms of biological role, catalyzes the reversible reaction in which hydroxymethyl group from 5,10-methylenetetrahydrofolate is transferred onto alpha-ketoisovalerate to form ketopantoate. The chain is 3-methyl-2-oxobutanoate hydroxymethyltransferase from Campylobacter jejuni (strain RM1221).